Consider the following 299-residue polypeptide: MADQLIRATAADDGIRAVGVITTRLTEDARQRHGLSYVATAALGRTMSAGLLLASSMKQAEARINLRIRGDGPLQGILVDAGLDGTVRGYVTNPGVELPPNAKGKLDVGGAVGKGFLYVIRDMGYGYPYSSTVELVSGEIGEDVTHYLVTSEQTPSALALGVFVGAQGVTASGGLLIQVLPKAAEDPALVELLESRLAHLQGFTPLLQAGKTLPDIFTDLLGDMGLKIFPQTQMVQFQCRCSTERVLGALKMLGQDELLDMIEKDDGAEATCDFCGEVYQVTSDQLGKLIDDLKTEAGA.

2 cysteine pairs are disulfide-bonded: cysteine 239–cysteine 241 and cysteine 272–cysteine 275.

The protein belongs to the HSP33 family. In terms of processing, under oxidizing conditions two disulfide bonds are formed involving the reactive cysteines. Under reducing conditions zinc is bound to the reactive cysteines and the protein is inactive.

The protein resides in the cytoplasm. In terms of biological role, redox regulated molecular chaperone. Protects both thermally unfolding and oxidatively damaged proteins from irreversible aggregation. Plays an important role in the bacterial defense system toward oxidative stress. The chain is 33 kDa chaperonin from Acaryochloris marina (strain MBIC 11017).